The primary structure comprises 603 residues: Probable methyltransferase PMT20 (603 aa).

Residues Met-1–Arg-16 lie on the Cytoplasmic side of the membrane. Residues Ile-17 to Ile-37 traverse the membrane as a helical; Signal-anchor for type II membrane protein segment. Over Phe-38–Ser-603 the chain is Lumenal. N-linked (GlcNAc...) asparagine glycans are attached at residues Asn-313 and Asn-600.

This sequence belongs to the methyltransferase superfamily.

The protein resides in the golgi apparatus membrane. This Arabidopsis thaliana (Mouse-ear cress) protein is Probable methyltransferase PMT20.